Consider the following 51-residue polypeptide: Large ribosomal subunit protein bL33 (51 aa).

Positions Met-1–Asp-20 are disordered.

It belongs to the bacterial ribosomal protein bL33 family.

This is Large ribosomal subunit protein bL33 from Psychromonas ingrahamii (strain DSM 17664 / CCUG 51855 / 37).